Here is a 33-residue protein sequence, read N- to C-terminus: Maurocalcin (33 aa).

3 disulfides stabilise this stretch: cysteine 3-cysteine 17, cysteine 10-cysteine 21, and cysteine 16-cysteine 32. The essential for stimulation of [3H]ryanodine binding to RYR stretch occupies residues 22-24 (KRR).

It belongs to the scorpion calcin family. In terms of processing, the non-natural D-maurocalcin (a chiral analog of maurocalcin composed of D-amino acids) completely loses the ability to stimulate [3H]ryanodine binding and calcium release. Its protease resistance, combined with its efficient cell penetration at concentrations devoid of cell toxicity, suggests that it should be an excellent vector for in vivo applications. As to expression, expressed by the venom gland.

It is found in the secreted. Its function is as follows. This toxin stabilizes ryanodine receptor 1 (RyR1) opening in a long-lasting subconductance state (48%-60% of the full conductance state). Furthermore, it triggers calcium release from sarcoplasmic vesicles (6.6 nM are enough to induce a sharp release, and 60% of the total calcium is released after toxin (100 nM) addition) probably by acting as a cell-penetrating peptide (CPP). In addition, it has been shown to dose-dependently stimulate ryanodine binding to RyR1 (EC(50)=12.5-26.4 nM). It also augments the bell-shaped calcium-[3H]ryanodine binding curve that is maximal at about 10 uM calcium concentration. It binds a different site as ryanodine. It acts synergistically with caffeine. In vivo, intracerebroventricular injection into mice causes death. The protein is Maurocalcin of Scorpio palmatus (Israeli golden scorpion).